Reading from the N-terminus, the 116-residue chain is Alpha-defensin 29 (116 aa).

The signal sequence occupies residues 1-19; it reads MKTLVLLSALVLPCFQVQA. A propeptide spanning residues 20–60 is cleaved from the precursor; it reads DPIQNTDEETKTEEQPEEEDQAVSVSFGGTEGSALQDVAQR. Residues 22–44 form a disordered region; it reads IQNTDEETKTEEQPEEEDQAVSV. Tandem repeats lie at residues 65–67, 68–70, 71–73, 74–76, 77–79, 80–82, 83–85, 86–88, and 89–91. Residues 65-70 are 2 X 3 AA tandem repeats of C-R-X; the sequence is CRKCRV. Residues 71 to 79 form a 3 X 3 AA tandem repeats of C-Q-X region; that stretch reads CQKCQVCQK. Positions 80–91 are 4 X 3 AA tandem repeats of C-P-X; it reads CPVCPTCPQCPK.

Belongs to the alpha-defensin family. In terms of tissue distribution, small bowel.

The protein localises to the secreted. Apparent precursor of a secreted, cationic, proline- and cysteine-rich peptide that contains Cys-Pro-Xaa repeats. Unlike cryptdin, the proposed mature peptide region lacks the structural motif characteristic of defensins. The polypeptide is Alpha-defensin 29 (Mus musculus (Mouse)).